The primary structure comprises 437 residues: MSVLLIEAFYGGSHKQLMDLINQEIEGCVLYTLPAKKWHWRARTAALYFMQAILPDDKYRVLFTSSVLNLAELAVLRPDLGKLKKILYFHENQLIYPVQKTQERDFQYGYNQILSCLVADIVVFNSAFNMESFLTSIKTFLKKIPDHRPKNLEEIIRPKCCVLYFPMTFPDISQFLPEHKRVSHTLADNMSSMDISHCPKTSLQAENMSVEFSHDQIQSSIGESSAEQERATISEKNICASGDPVILNASNTLAGDIRQKKPLHIVWPHRWEHDKDPETFFKVLLKLKEKELTFHVSVLGETFTDVPDIFSEARITLGSSVLHWGYLASKDDYLQALCMADVVVSTAKHEFFGVAMLEAVHCGCYPLCPKSLVYPEIFPAVYLYSSPEQLYRKLENFCKRPDVVRRHRFQGDTARFSWAALRGEFRSLLAAEPREDL.

This sequence belongs to the glycosyltransferase group 1 family. Glycosyltransferase 4 subfamily.

It is found in the cytoplasm. Its subcellular location is the nucleus. It carries out the reaction queuosine(34) in tRNA(Asp) + GDP-alpha-D-mannose = O-4''-alpha-D-mannosylqueuosine(34) in tRNA(Asp) + GDP + H(+). Glycosyltransferase that specifically catalyzes mannosylation of cytoplasmic tRNA(Asp) modified with queuosine at position 34 (queuosine(34)). Mannosylates the cyclopentene moiety of queuosine(34) in tRNA(Asp) to form mannosyl-queuosine(34). Mannosylation of queuosine(34) in tRNA(Asp) is required to slow-down elongation at cognate codons, GAC and GAU, thereby regulating protein translation. This chain is tRNA-queuosine alpha-mannosyltransferase (gtdc1), found in Xenopus tropicalis (Western clawed frog).